Here is a 926-residue protein sequence, read N- to C-terminus: MTTKDYPSLWGFGTTKTFKIPIEHLDFKYIEKCSDVKHLEKILCVLRSGEEGYYPELTEFCEKHLQALAPESRALRKDKPAATAASFTAEEWEKIDGDIKSWVSEIKKEEDKMHFHETETFPAMKDNLPPVRGSNSCLHVGKEKYSKRPTKKKTPRDYAEWDKFDVEKECLKIDEDYKEKTVIDKSHLSKIETRIDTAGLTEKEKDFLATREKEKGNEAFNSGDYEEAVMYYTRSISALPTVVAYNNRAQAEIKLQNWNSAFQDCEKVLELEPGNVKALLRRATTYKHQNKLREATEDLSKVLDVEPDNDLAKKTLSEVERDLKNSEAASETQTKGKRMVIQEIENSEDEEGKSGRKHEDGGGDKKPAEPAGAARAAQPCVMGNIQKKLTGKAEGGKRPARGAPQRGQTPEAGADKRSPRRASAAAAAGGGATGHPGGGQGAENPAGLKSQGNELFRSGQFAEAAGKYSAAIALLEPAGSEIADDLSILYSNRAACYLKEGNCSGCIQDCNRALELHPFSMKPLLRRAMAYETLEQYGKAYVDYKTVLQIDCGLQLANDSVNRLSRILMELDGPNWREKLSPIPAVPASVPLQAWHPAKEMISKQAGDSSSHRQQGITDEKTFKALKEEGNQCVNDKNYKDALSKYSECLKINNKECAIYTNRALCYLKLCQFEEAKQDCDQALQLADGNVKAFYRRALAHKGLKNYQKSLIDLNKVILLDPSIIEAKMELEEVTRLLNLKDKTAPFNKEKERRKIEIQEVNEGKEEPGRPAGEVSMGCLASEKGGKSSRSPEDPEKLPIAKPNNAYEFGQIINALSTRKDKEACAHLLAITAPKDLPMFLSNKLEGDTFLLLIQSLKNNLIEKDPSLVYQHLLYLSKAERFKMMLTLISKGQKELIEQLFEDLSDTPNNHFTLEDIQALKRQYEL.

3 TPR repeats span residues Ala209–Val242, Ala244–Asn275, and Val276–Asn309. Positions Glu318–Gly452 are disordered. 2 positions are modified to phosphoserine: Ser347 and Ser354. Over residues Gly352–Ala368 the composition is skewed to basic and acidic residues. Over residues Glu369–Pro379 the composition is skewed to low complexity. A Phosphoserine modification is found at Ser423. A compositionally biased stretch (gly residues) spans Ala428–Gly441. TPR repeat units follow at residues Pro445–Ala478, Ser487–Ser520, Lys522–Leu554, Phe623–Glu656, Cys657–Asn690, and Lys692–Ile724. Composition is skewed to basic and acidic residues over residues Ile758–Gly769 and Lys784–Pro799. The segment at Ile758–Ala801 is disordered. Position 781–788 (Ala781–Ser788) interacts with GTP. Ser791 is modified (phosphoserine).

Present in most tissues, including lung, with the strongest expression in brain, colon, kidney, and testis. In sperm and testis, detected in particular in pachytene primary spermatocytes. Up-regulated in pancreatic tumor tissues and not in normal pancreatic tissue.

Its subcellular location is the cytoplasm. The protein resides in the dynein axonemal particle. May play a role in the cytoplasmic assembly of the ciliary dynein arms. May play a role in fertilization. Binds GTP and has GTPase activity. The chain is Sperm-associated antigen 1 (SPAG1) from Homo sapiens (Human).